The sequence spans 291 residues: Nucleoid occlusion protein (291 aa).

The H-T-H motif DNA-binding region spans 155-174; the sequence is EALAQRLGKGQSTVANKLRL.

Belongs to the ParB family.

It localises to the cytoplasm. Its subcellular location is the nucleoid. Functionally, effects nucleoid occlusion by binding relatively nonspecifically to DNA and preventing the assembly of the division machinery in the vicinity of the nucleoid, especially under conditions that disturb the cell cycle. It helps to coordinate cell division and chromosome segregation by preventing the formation of the Z ring through the nucleoid, which would cause chromosome breakage. In Bacillus pumilus (strain SAFR-032), this protein is Nucleoid occlusion protein.